Here is a 139-residue protein sequence, read N- to C-terminus: Putative pre-16S rRNA nuclease (139 aa).

The protein belongs to the YqgF nuclease family.

Its subcellular location is the cytoplasm. Functionally, could be a nuclease involved in processing of the 5'-end of pre-16S rRNA. In Streptococcus pyogenes serotype M49 (strain NZ131), this protein is Putative pre-16S rRNA nuclease.